The sequence spans 160 residues: Large ribosomal subunit protein eL21 (160 aa).

Basic and acidic residues-rich tracts occupy residues 112-123 (NDQKKKEAKEKG) and 136-145 (REAHFVRTNG). Residues 112 to 145 (NDQKKKEAKEKGTWVQLKRQPAPPREAHFVRTNG) form a disordered region.

The protein belongs to the eukaryotic ribosomal protein eL21 family. As to quaternary structure, component of the large ribosomal subunit.

Its subcellular location is the cytoplasm. It is found in the cytosol. The protein resides in the endoplasmic reticulum. Component of the large ribosomal subunit. The ribosome is a large ribonucleoprotein complex responsible for the synthesis of proteins in the cell. The polypeptide is Large ribosomal subunit protein eL21 (Mus musculus (Mouse)).